Here is a 354-residue protein sequence, read N- to C-terminus: 3-dehydroquinate synthase (354 aa).

NAD(+) contacts are provided by residues Asp39, Tyr45, 68 to 71 (EKTK), 100 to 104 (GATGD), 124 to 125 (TT), Lys136, Lys145, and 163 to 166 (FLKT). Zn(2+)-binding residues include Glu178, His242, and His256.

It belongs to the sugar phosphate cyclases superfamily. Dehydroquinate synthase family. Requires NAD(+) as cofactor. Co(2+) serves as cofactor. Zn(2+) is required as a cofactor.

It localises to the cytoplasm. It catalyses the reaction 7-phospho-2-dehydro-3-deoxy-D-arabino-heptonate = 3-dehydroquinate + phosphate. Its pathway is metabolic intermediate biosynthesis; chorismate biosynthesis; chorismate from D-erythrose 4-phosphate and phosphoenolpyruvate: step 2/7. Functionally, catalyzes the conversion of 3-deoxy-D-arabino-heptulosonate 7-phosphate (DAHP) to dehydroquinate (DHQ). The sequence is that of 3-dehydroquinate synthase from Staphylococcus aureus (strain MRSA252).